The primary structure comprises 249 residues: 2,3-bisphosphoglycerate-dependent phosphoglycerate mutase (249 aa).

Substrate contacts are provided by residues 10–17, 23–24, Arg62, 89–92, Lys100, 116–117, and 185–186; these read RHGESEWN, TG, ERHY, RR, and GN. Residue His11 is the Tele-phosphohistidine intermediate of the active site. Glu89 acts as the Proton donor/acceptor in catalysis.

This sequence belongs to the phosphoglycerate mutase family. BPG-dependent PGAM subfamily. In terms of assembly, homodimer.

It catalyses the reaction (2R)-2-phosphoglycerate = (2R)-3-phosphoglycerate. Its pathway is carbohydrate degradation; glycolysis; pyruvate from D-glyceraldehyde 3-phosphate: step 3/5. Its function is as follows. Catalyzes the interconversion of 2-phosphoglycerate and 3-phosphoglycerate. The chain is 2,3-bisphosphoglycerate-dependent phosphoglycerate mutase from Hamiltonella defensa subsp. Acyrthosiphon pisum (strain 5AT).